Here is a 97-residue protein sequence, read N- to C-terminus: MSRRCELTAKGPQVGHKVSHSNIKSKRRFLPNLCNVTLMSETLGQSVRLRVSTNALKSVDHNGGLDAFLLKANIANLSPKAADLKRQIEKKKLAAAS.

Positions 1 to 20 (MSRRCELTAKGPQVGHKVSH) are disordered.

Belongs to the bacterial ribosomal protein bL28 family.

The sequence is that of Large ribosomal subunit protein bL28 from Afipia carboxidovorans (strain ATCC 49405 / DSM 1227 / KCTC 32145 / OM5) (Oligotropha carboxidovorans).